The primary structure comprises 260 residues: Dynein regulatory complex subunit 6 (260 aa).

Over residues 1–13 (MAPKKKGGGKKKK) the composition is skewed to basic residues. The interval 1-43 (MAPKKKGGGKKKKKDDGAEPPHDGSWERAVESGTWEKPVTDLP) is disordered. The span at 14 to 30 (KDDGAEPPHDGSWERAV) shows a compositional bias: basic and acidic residues.

Belongs to the DRC6 family. Component of the nexin-dynein regulatory complex (N-DRC).

The protein localises to the cytoplasm. It is found in the cytoskeleton. The protein resides in the flagellum axoneme. Component of the nexin-dynein regulatory complex (N-DRC), a key regulator of ciliary/flagellar motility which maintains the alignment and integrity of the distal axoneme and regulates microtubule sliding in motile axonemes. The sequence is that of Dynein regulatory complex subunit 6 from Chlamydomonas reinhardtii (Chlamydomonas smithii).